A 237-amino-acid polypeptide reads, in one-letter code: Leucyl/phenylalanyl-tRNA--protein transferase (237 aa).

Belongs to the L/F-transferase family.

The protein resides in the cytoplasm. It carries out the reaction N-terminal L-lysyl-[protein] + L-leucyl-tRNA(Leu) = N-terminal L-leucyl-L-lysyl-[protein] + tRNA(Leu) + H(+). The catalysed reaction is N-terminal L-arginyl-[protein] + L-leucyl-tRNA(Leu) = N-terminal L-leucyl-L-arginyl-[protein] + tRNA(Leu) + H(+). It catalyses the reaction L-phenylalanyl-tRNA(Phe) + an N-terminal L-alpha-aminoacyl-[protein] = an N-terminal L-phenylalanyl-L-alpha-aminoacyl-[protein] + tRNA(Phe). Its function is as follows. Functions in the N-end rule pathway of protein degradation where it conjugates Leu, Phe and, less efficiently, Met from aminoacyl-tRNAs to the N-termini of proteins containing an N-terminal arginine or lysine. The protein is Leucyl/phenylalanyl-tRNA--protein transferase of Aromatoleum aromaticum (strain DSM 19018 / LMG 30748 / EbN1) (Azoarcus sp. (strain EbN1)).